The chain runs to 307 residues: Ribonuclease Z (307 aa).

Zn(2+) is bound by residues His-63, His-65, Asp-67, His-68, His-141, Asp-212, and His-270. Asp-67 acts as the Proton acceptor in catalysis.

Belongs to the RNase Z family. As to quaternary structure, homodimer. Zn(2+) serves as cofactor.

It catalyses the reaction Endonucleolytic cleavage of RNA, removing extra 3' nucleotides from tRNA precursor, generating 3' termini of tRNAs. A 3'-hydroxy group is left at the tRNA terminus and a 5'-phosphoryl group is left at the trailer molecule.. Its function is as follows. Zinc phosphodiesterase, which displays some tRNA 3'-processing endonuclease activity. Probably involved in tRNA maturation, by removing a 3'-trailer from precursor tRNA. This is Ribonuclease Z from Bacillus cereus (strain ATCC 10987 / NRS 248).